The following is a 93-amino-acid chain: Small ribosomal subunit protein uS19 (93 aa).

It belongs to the universal ribosomal protein uS19 family.

Protein S19 forms a complex with S13 that binds strongly to the 16S ribosomal RNA. This is Small ribosomal subunit protein uS19 from Oenococcus oeni (strain ATCC BAA-331 / PSU-1).